Consider the following 245-residue polypeptide: tRNA1(Val) (adenine(37)-N6)-methyltransferase (245 aa).

The protein belongs to the methyltransferase superfamily. tRNA (adenine-N(6)-)-methyltransferase family.

Its subcellular location is the cytoplasm. It catalyses the reaction adenosine(37) in tRNA1(Val) + S-adenosyl-L-methionine = N(6)-methyladenosine(37) in tRNA1(Val) + S-adenosyl-L-homocysteine + H(+). In terms of biological role, specifically methylates the adenine in position 37 of tRNA(1)(Val) (anticodon cmo5UAC). The sequence is that of tRNA1(Val) (adenine(37)-N6)-methyltransferase from Salmonella paratyphi A (strain ATCC 9150 / SARB42).